The following is a 103-amino-acid chain: MIKKAFCMQVYPDQHAEYQRRHEKLWPEMRQMLKEHGAIKYQIFLNPETSTLFGYLEIEDEARWEQIALTPINQKWWNYMEDIMETNPDCSPMTAELKKVFEL.

Substrate is bound at residue tyrosine 18. Histidine 22 serves as the catalytic Proton donor. Substrate is bound by residues tyrosine 41 and tryptophan 76–tryptophan 77.

This sequence belongs to the rhamnose mutarotase family. In terms of assembly, homodimer.

It is found in the cytoplasm. It carries out the reaction alpha-L-rhamnose = beta-L-rhamnose. The protein operates within carbohydrate metabolism; L-rhamnose metabolism. Involved in the anomeric conversion of L-rhamnose. This Enterococcus faecalis (strain ATCC 700802 / V583) protein is L-rhamnose mutarotase.